We begin with the raw amino-acid sequence, 624 residues long: tRNA uridine 5-carboxymethylaminomethyl modification enzyme MnmG (624 aa).

FAD contacts are provided by residues 13 to 18 (GGGHAG), Val125, and Ser180. 273–287 (GPRYCPSIEDKIVRF) serves as a coordination point for NAD(+). Gln370 contributes to the FAD binding site.

This sequence belongs to the MnmG family. Homodimer. Heterotetramer of two MnmE and two MnmG subunits. FAD is required as a cofactor.

The protein localises to the cytoplasm. In terms of biological role, NAD-binding protein involved in the addition of a carboxymethylaminomethyl (cmnm) group at the wobble position (U34) of certain tRNAs, forming tRNA-cmnm(5)s(2)U34. The sequence is that of tRNA uridine 5-carboxymethylaminomethyl modification enzyme MnmG from Legionella pneumophila (strain Paris).